The following is a 547-amino-acid chain: Serine/threonine-protein kinase RIO2 (547 aa).

The region spanning 97–273 is the Protein kinase domain; it reads VGNQMGVGKE…RDVKCIREFF (177 aa). Residue K123 participates in ATP binding. Catalysis depends on D228, which acts as the Proton acceptor. Residues S332, S337, S350, S362, S385, and S390 each carry the phosphoserine modification. The tract at residues 352–385 is disordered; it reads LEKEADPADESGGSWCCSSTDSKQIKDGGLPEES. The Nuclear export signal signature appears at 399-408; the sequence is AVEEMERQVL. The segment at 404-445 is disordered; it reads ERQVLPHRSVTEFSEESRRTENDGQPGQRSPAGSEDCDDEPP. Phosphoserine occurs at positions 412, 417, 433, 437, and 543.

This sequence belongs to the protein kinase superfamily. RIO-type Ser/Thr kinase family. As to quaternary structure, associated with late 40S pre-ribosomal particles. Interacts with PLK1 (via its N-terminus). Mg(2+) serves as cofactor. In terms of processing, autophosphorylated (in vitro). Phosphorylation affects the timing of the metaphase-anaphase transition.

Its subcellular location is the cytoplasm. It carries out the reaction L-seryl-[protein] + ATP = O-phospho-L-seryl-[protein] + ADP + H(+). The enzyme catalyses L-threonyl-[protein] + ATP = O-phospho-L-threonyl-[protein] + ADP + H(+). In terms of biological role, serine/threonine-protein kinase involved in the final steps of cytoplasmic maturation of the 40S ribosomal subunit. Involved in export of the 40S pre-ribosome particles (pre-40S) from the nucleus to the cytoplasm. Its kinase activity is required for the release of NOB1, PNO1 and LTV1 from the late pre-40S and the processing of 18S-E pre-rRNA to the mature 18S rRNA. May regulate the timing of the metaphase-anaphase transition during mitotic progression, and its phosphorylation, may regulate this function. This Mus musculus (Mouse) protein is Serine/threonine-protein kinase RIO2 (Riok2).